The primary structure comprises 236 residues: MADDWESAADSEIVIRPNAANNINKWEGEDDDEDVKESWEDEEEKKDEEKPTKTEAPVKTKPNKALKAKLEEQERLKEEEEQKRLAEMTPEEKLAEKLRLQKIQEESDLKSALETFGVTSIGGGLDAFNPESKEEFKEFGATLSWKVAQYRESIHFPQFIEDLVRSLCCNLSAADIKKVKMSVESLHSEKLKMEKAAAKKSAMKGKGKVSLRTENDDIDGYQKYGNDFTDDYDDFM.

The segment at 1-86 (MADDWESAAD…KEEEEQKRLA (86 aa)) is disordered. Acidic residues predominate over residues 28–46 (GEDDDEDVKESWEDEEEKK). Composition is skewed to basic and acidic residues over residues 47–58 (DEEKPTKTEAPV) and 68–86 (AKLEEQERLKEEEEQKRLA). The stretch at 61–115 (KPNKALKAKLEEQERLKEEEEQKRLAEMTPEEKLAEKLRLQKIQEESDLKSALET) forms a coiled coil.

It belongs to the eIF-3 subunit J family. In terms of assembly, component of the eukaryotic translation initiation factor 3 (eIF-3) complex. The eIF-3 complex interacts with pix.

Its subcellular location is the cytoplasm. Its function is as follows. Component of the eukaryotic translation initiation factor 3 (eIF-3) complex, which is involved in protein synthesis of a specialized repertoire of mRNAs and, together with other initiation factors, stimulates binding of mRNA and methionyl-tRNAi to the 40S ribosome. The eIF-3 complex specifically targets and initiates translation of a subset of mRNAs involved in cell proliferation. The protein is Eukaryotic translation initiation factor 3 subunit J of Drosophila mojavensis (Fruit fly).